A 221-amino-acid chain; its full sequence is Sperm acrosome membrane-associated protein 3 (221 aa).

Residues 1 to 69 (MGICMSMYTQ…EARSRAPRRQ (69 aa)) lie on the Cytoplasmic side of the membrane. Residues 70 to 90 (LCPPGITWLALAYLLSCLLAS) form a helical; Signal-anchor for type II membrane protein membrane-spanning segment. At 91–221 (SKAKVFSRCE…LSDWVDGCDF (131 aa)) the chain is on the extracellular side. The region spanning 94 to 221 (KVFSRCELAK…LSDWVDGCDF (128 aa)) is the C-type lysozyme domain. Intrachain disulfides connect Cys-99/Cys-219, Cys-123/Cys-207, Cys-157/Cys-172, and Cys-168/Cys-186.

It belongs to the glycosyl hydrolase 22 family. In terms of assembly, interacts with ASTL. As to expression, the processed form is expressed in sperm (at protein level). Expressed strongly in testis and epididymis and weakly in pancreas.

It localises to the cytoplasmic vesicle. It is found in the secretory vesicle. The protein resides in the acrosome membrane. The protein localises to the secreted. In terms of biological role, sperm surface membrane protein that may be involved in sperm-egg plasma membrane adhesion and fusion during fertilization. It could be a potential receptor for the egg oligosaccharide residue N-acetylglucosamine, which is present in the extracellular matrix over the egg plasma membrane. The processed form has no detectable bacteriolytic activity in vitro. The protein is Sperm acrosome membrane-associated protein 3 (Spaca3) of Mus musculus (Mouse).